Consider the following 255-residue polypeptide: 5'-nucleotidase SurE (255 aa).

The a divalent metal cation site is built by aspartate 8, aspartate 9, serine 40, and asparagine 93.

It belongs to the SurE nucleotidase family. Requires a divalent metal cation as cofactor.

Its subcellular location is the cytoplasm. The enzyme catalyses a ribonucleoside 5'-phosphate + H2O = a ribonucleoside + phosphate. In terms of biological role, nucleotidase that shows phosphatase activity on nucleoside 5'-monophosphates. The chain is 5'-nucleotidase SurE from Rhodopseudomonas palustris (strain BisA53).